Reading from the N-terminus, the 243-residue chain is Probable 2-phosphosulfolactate phosphatase (243 aa).

This sequence belongs to the ComB family. Requires Mg(2+) as cofactor.

It catalyses the reaction (2R)-O-phospho-3-sulfolactate + H2O = (2R)-3-sulfolactate + phosphate. This chain is Probable 2-phosphosulfolactate phosphatase, found in Prochlorococcus marinus (strain MIT 9313).